The sequence spans 404 residues: Succinyl-diaminopimelate desuccinylase (404 aa).

H80 contacts Zn(2+). D82 is an active-site residue. D113 contributes to the Zn(2+) binding site. E147 serves as the catalytic Proton acceptor. Zn(2+) is bound by residues E148, E176, and H373.

It belongs to the peptidase M20A family. DapE subfamily. As to quaternary structure, homodimer. Zn(2+) is required as a cofactor. It depends on Co(2+) as a cofactor.

It carries out the reaction N-succinyl-(2S,6S)-2,6-diaminopimelate + H2O = (2S,6S)-2,6-diaminopimelate + succinate. It functions in the pathway amino-acid biosynthesis; L-lysine biosynthesis via DAP pathway; LL-2,6-diaminopimelate from (S)-tetrahydrodipicolinate (succinylase route): step 3/3. In terms of biological role, catalyzes the hydrolysis of N-succinyl-L,L-diaminopimelic acid (SDAP), forming succinate and LL-2,6-diaminopimelate (DAP), an intermediate involved in the bacterial biosynthesis of lysine and meso-diaminopimelic acid, an essential component of bacterial cell walls. The polypeptide is Succinyl-diaminopimelate desuccinylase (Allorhizobium ampelinum (strain ATCC BAA-846 / DSM 112012 / S4) (Agrobacterium vitis (strain S4))).